A 124-amino-acid polypeptide reads, in one-letter code: Profilin-2 (124 aa).

Belongs to the profilin family. As to quaternary structure, occurs in many kinds of cells as a complex with monomeric actin in a 1:1 ratio. Interacts with forH.

The protein localises to the cytoplasm. The protein resides in the cytoskeleton. Binds to actin and affects the structure of the cytoskeleton. At high concentrations, profilin prevents the polymerization of actin, whereas it enhances it at low concentrations. By binding to PIP2, it inhibits the formation of IP3 and DG. This Dictyostelium discoideum (Social amoeba) protein is Profilin-2 (proB).